A 1116-amino-acid chain; its full sequence is Probable chitinase LysM11 (1116 aa).

In terms of domain architecture, LysM spans 233–283 (GTYTIQTNDNCAEIAAHFGVTQDDIYDLNEDTWGWAGCGTNDLKADQVICL). The GH18 domain maps to 346–719 (FYHVAYFEVF…LGVDPDSDEA (374 aa)). Residue Glu466 is the Proton donor of the active site. 2 residues coordinate chitin: Tyr467 and Trp701.

It belongs to the glycosyl hydrolase 18 family. Chitinase class V subfamily.

It catalyses the reaction Random endo-hydrolysis of N-acetyl-beta-D-glucosaminide (1-&gt;4)-beta-linkages in chitin and chitodextrins.. Functionally, probable chitinase involved in the degradation of chitin, a component of the cell walls of fungi and exoskeletal elements of some animals (including worms and arthropods). Might be involved in manipulation of host defenses for successful infection. This Penicillium expansum (Blue mold rot fungus) protein is Probable chitinase LysM11.